Here is a 586-residue protein sequence, read N- to C-terminus: Asparagine synthetase [glutamine-hydrolyzing] 1 (586 aa).

The active-site For GATase activity is the Cys2. One can recognise a Glutamine amidotransferase type-2 domain in the interval 2–185 (CGILAVLGCS…PGHLYSSRER (184 aa)). L-glutamine is bound by residues 50-54 (RLAIV), 75-77 (NGE), and Asp98. In terms of domain architecture, Asparagine synthetase spans 193–516 (PTWFSESIPS…PQNSARLTVP (324 aa)). ATP is bound by residues Leu231, Val267, and 341–342 (SG).

The enzyme catalyses L-aspartate + L-glutamine + ATP + H2O = L-asparagine + L-glutamate + AMP + diphosphate + H(+). It participates in amino-acid biosynthesis; L-asparagine biosynthesis; L-asparagine from L-aspartate (L-Gln route): step 1/1. This chain is Asparagine synthetase [glutamine-hydrolyzing] 1 (AS1), found in Lotus japonicus (Lotus corniculatus var. japonicus).